The sequence spans 393 residues: Formate-dependent phosphoribosylglycinamide formyltransferase (393 aa).

N(1)-(5-phospho-beta-D-ribosyl)glycinamide-binding positions include 22–23 (EL) and glutamate 82. Residues arginine 114, lysine 155, 160 to 165 (SSGKGQ), 195 to 198 (EGFI), and glutamate 203 contribute to the ATP site. The region spanning 119-308 (RLAAEELDLP…QFALHARAIL (190 aa)) is the ATP-grasp domain. 2 residues coordinate Mg(2+): glutamate 267 and glutamate 279. Residues aspartate 286, lysine 356, and 363 to 364 (RR) each bind N(1)-(5-phospho-beta-D-ribosyl)glycinamide.

It belongs to the PurK/PurT family. As to quaternary structure, homodimer.

It carries out the reaction N(1)-(5-phospho-beta-D-ribosyl)glycinamide + formate + ATP = N(2)-formyl-N(1)-(5-phospho-beta-D-ribosyl)glycinamide + ADP + phosphate + H(+). Its pathway is purine metabolism; IMP biosynthesis via de novo pathway; N(2)-formyl-N(1)-(5-phospho-D-ribosyl)glycinamide from N(1)-(5-phospho-D-ribosyl)glycinamide (formate route): step 1/1. Involved in the de novo purine biosynthesis. Catalyzes the transfer of formate to 5-phospho-ribosyl-glycinamide (GAR), producing 5-phospho-ribosyl-N-formylglycinamide (FGAR). Formate is provided by PurU via hydrolysis of 10-formyl-tetrahydrofolate. This Pseudomonas putida (strain ATCC 47054 / DSM 6125 / CFBP 8728 / NCIMB 11950 / KT2440) protein is Formate-dependent phosphoribosylglycinamide formyltransferase.